Consider the following 551-residue polypeptide: Chaperonin GroEL (551 aa).

ATP is bound by residues 30-33, lysine 51, 87-91, glycine 415, 478-480, and aspartate 494; these read TLGP, DGTTT, and NAA.

The protein belongs to the chaperonin (HSP60) family. In terms of assembly, forms a cylinder of 14 subunits composed of two heptameric rings stacked back-to-back. Interacts with the co-chaperonin GroES.

Its subcellular location is the cytoplasm. The catalysed reaction is ATP + H2O + a folded polypeptide = ADP + phosphate + an unfolded polypeptide.. Its function is as follows. Together with its co-chaperonin GroES, plays an essential role in assisting protein folding. The GroEL-GroES system forms a nano-cage that allows encapsulation of the non-native substrate proteins and provides a physical environment optimized to promote and accelerate protein folding. This chain is Chaperonin GroEL, found in Syntrophotalea carbinolica (strain DSM 2380 / NBRC 103641 / GraBd1) (Pelobacter carbinolicus).